We begin with the raw amino-acid sequence, 266 residues long: Diphthine synthase (266 aa).

S-adenosyl-L-methionine contacts are provided by residues leucine 9, aspartate 84, valine 87, 112–113 (SI), leucine 169, alanine 210, and histidine 235.

It belongs to the diphthine synthase family. In terms of assembly, homodimer.

The enzyme catalyses 2-[(3S)-amino-3-carboxypropyl]-L-histidyl-[translation elongation factor 2] + 3 S-adenosyl-L-methionine = diphthine-[translation elongation factor 2] + 3 S-adenosyl-L-homocysteine + 3 H(+). It participates in protein modification; peptidyl-diphthamide biosynthesis. S-adenosyl-L-methionine-dependent methyltransferase that catalyzes the trimethylation of the amino group of the modified target histidine residue in translation elongation factor 2 (EF-2), to form an intermediate called diphthine. The three successive methylation reactions represent the second step of diphthamide biosynthesis. This Methanosarcina barkeri (strain Fusaro / DSM 804) protein is Diphthine synthase.